The sequence spans 227 residues: Phosphatidylserine decarboxylase proenzyme (227 aa).

Ser181 serves as the catalytic Schiff-base intermediate with substrate; via pyruvic acid. Residue Ser181 is modified to Pyruvic acid (Ser); by autocatalysis.

Belongs to the phosphatidylserine decarboxylase family. PSD-A subfamily. Heterodimer of a large membrane-associated beta subunit and a small pyruvoyl-containing alpha subunit. Pyruvate is required as a cofactor. In terms of processing, is synthesized initially as an inactive proenzyme. Formation of the active enzyme involves a self-maturation process in which the active site pyruvoyl group is generated from an internal serine residue via an autocatalytic post-translational modification. Two non-identical subunits are generated from the proenzyme in this reaction, and the pyruvate is formed at the N-terminus of the alpha chain, which is derived from the carboxyl end of the proenzyme. The post-translation cleavage follows an unusual pathway, termed non-hydrolytic serinolysis, in which the side chain hydroxyl group of the serine supplies its oxygen atom to form the C-terminus of the beta chain, while the remainder of the serine residue undergoes an oxidative deamination to produce ammonia and the pyruvoyl prosthetic group on the alpha chain.

Its subcellular location is the cell membrane. The catalysed reaction is a 1,2-diacyl-sn-glycero-3-phospho-L-serine + H(+) = a 1,2-diacyl-sn-glycero-3-phosphoethanolamine + CO2. It participates in phospholipid metabolism; phosphatidylethanolamine biosynthesis; phosphatidylethanolamine from CDP-diacylglycerol: step 2/2. Its function is as follows. Catalyzes the formation of phosphatidylethanolamine (PtdEtn) from phosphatidylserine (PtdSer). This is Phosphatidylserine decarboxylase proenzyme from Anaplasma phagocytophilum (strain HZ).